The following is a 258-amino-acid chain: 5'-nucleotidase SurE (258 aa).

4 residues coordinate a divalent metal cation: Asp-9, Asp-10, Ser-42, and Asn-96.

This sequence belongs to the SurE nucleotidase family. It depends on a divalent metal cation as a cofactor.

The protein resides in the cytoplasm. The enzyme catalyses a ribonucleoside 5'-phosphate + H2O = a ribonucleoside + phosphate. Its function is as follows. Nucleotidase that shows phosphatase activity on nucleoside 5'-monophosphates. The sequence is that of 5'-nucleotidase SurE from Campylobacter jejuni subsp. doylei (strain ATCC BAA-1458 / RM4099 / 269.97).